The chain runs to 551 residues: DNA ligase (551 aa).

Glu-246 is a binding site for ATP. The active-site N6-AMP-lysine intermediate is Lys-248. ATP contacts are provided by Arg-253, Arg-268, Glu-298, Phe-337, Arg-414, and Lys-420.

Belongs to the ATP-dependent DNA ligase family. The cofactor is Mg(2+).

It carries out the reaction ATP + (deoxyribonucleotide)n-3'-hydroxyl + 5'-phospho-(deoxyribonucleotide)m = (deoxyribonucleotide)n+m + AMP + diphosphate.. DNA ligase that seals nicks in double-stranded DNA during DNA replication, DNA recombination and DNA repair. This chain is DNA ligase, found in Methanobrevibacter smithii (strain ATCC 35061 / DSM 861 / OCM 144 / PS).